We begin with the raw amino-acid sequence, 461 residues long: Ribulose bisphosphate carboxylase (461 aa).

N113 lines the substrate pocket. Residue K168 is the Proton acceptor of the active site. K170 is a binding site for substrate. Mg(2+) contacts are provided by K193, D195, and E196. K193 carries the post-translational modification N6-carboxylysine. H289 (proton acceptor) is an active-site residue. Substrate-binding residues include R290, H323, and S370.

This sequence belongs to the RuBisCO large chain family. Type II subfamily. In terms of assembly, homodimer. Mg(2+) is required as a cofactor.

The catalysed reaction is 2 (2R)-3-phosphoglycerate + 2 H(+) = D-ribulose 1,5-bisphosphate + CO2 + H2O. It catalyses the reaction D-ribulose 1,5-bisphosphate + O2 = 2-phosphoglycolate + (2R)-3-phosphoglycerate + 2 H(+). Its function is as follows. RuBisCO catalyzes two reactions: the carboxylation of D-ribulose 1,5-bisphosphate, the primary event in carbon dioxide fixation, as well as the oxidative fragmentation of the pentose substrate. Both reactions occur simultaneously and in competition at the same active site. The sequence is that of Ribulose bisphosphate carboxylase from Thiomonas intermedia (strain K12) (Thiobacillus intermedius).